The following is a 210-amino-acid chain: tRNA (guanine-N(7)-)-methyltransferase (210 aa).

The S-adenosyl-L-methionine site is built by Glu-36, Glu-61, Asp-90, and Asp-112. Asp-112 is an active-site residue. Substrate contacts are provided by residues Lys-116, Asp-148, and 188 to 191 (TEYE).

Belongs to the class I-like SAM-binding methyltransferase superfamily. TrmB family.

The catalysed reaction is guanosine(46) in tRNA + S-adenosyl-L-methionine = N(7)-methylguanosine(46) in tRNA + S-adenosyl-L-homocysteine. It functions in the pathway tRNA modification; N(7)-methylguanine-tRNA biosynthesis. Its function is as follows. Catalyzes the formation of N(7)-methylguanine at position 46 (m7G46) in tRNA. The chain is tRNA (guanine-N(7)-)-methyltransferase from Mycoplasma pneumoniae (strain ATCC 29342 / M129 / Subtype 1) (Mycoplasmoides pneumoniae).